The primary structure comprises 292 residues: Protease HtpX homolog (292 aa).

2 helical membrane-spanning segments follow: residues 7 to 27 (TFIL…LIGG) and 29 to 49 (GGAV…WWNS). His131 is a binding site for Zn(2+). Glu132 is an active-site residue. His135 is a binding site for Zn(2+). 2 helical membrane passes run 148 to 168 (ATMA…SMFG) and 178 to 198 (LAAI…QMAI). Glu203 is a binding site for Zn(2+).

Belongs to the peptidase M48B family. Requires Zn(2+) as cofactor.

The protein localises to the cell inner membrane. The sequence is that of Protease HtpX homolog from Paracoccus denitrificans (strain Pd 1222).